The sequence spans 212 residues: 3,4-dihydroxy-2-butanone 4-phosphate synthase (212 aa).

Residues 37–38 (RE), D42, 150–154 (RRGHT), and E174 contribute to the D-ribulose 5-phosphate site. E38 serves as a coordination point for Mg(2+). Mg(2+) is bound at residue H153.

Belongs to the DHBP synthase family. In terms of assembly, homodimer. It depends on Mg(2+) as a cofactor. Mn(2+) is required as a cofactor.

The enzyme catalyses D-ribulose 5-phosphate = (2S)-2-hydroxy-3-oxobutyl phosphate + formate + H(+). It participates in cofactor biosynthesis; riboflavin biosynthesis; 2-hydroxy-3-oxobutyl phosphate from D-ribulose 5-phosphate: step 1/1. Catalyzes the conversion of D-ribulose 5-phosphate to formate and 3,4-dihydroxy-2-butanone 4-phosphate. This chain is 3,4-dihydroxy-2-butanone 4-phosphate synthase, found in Shewanella piezotolerans (strain WP3 / JCM 13877).